Here is a 92-residue protein sequence, read N- to C-terminus: Bombyxin A-7 (92 aa).

A signal peptide spans 1 to 19 (MKLLLAIALMLTIVMWVST). Residue Gln-20 is modified to Pyrrolidone carboxylic acid. Cystine bridges form between Cys-29–Cys-79, Cys-41–Cys-92, and Cys-78–Cys-83. Positions 50–70 (SDAQYASYGSAWLMPYSEGRG) are cleaved as a propeptide — c peptide like.

Belongs to the insulin family. As to quaternary structure, heterodimer of a B chain and an A chain linked by two disulfide bonds.

It is found in the secreted. In terms of biological role, brain peptide responsible for activation of prothoracic glands to produce ecdysone in insects. This Bombyx mori (Silk moth) protein is Bombyxin A-7 (BBXA7).